The chain runs to 707 residues: D-(-)-3-hydroxybutyrate oligomer hydrolase (707 aa).

An N-terminal signal peptide occupies residues 1–32 (MASVFKVRSASGHVPVVRTLAAMMAVTVVLTA). The active-site Charge relay system is the serine 321.

It belongs to the D-(-)-3-hydroxybutyrate oligomer hydrolase family.

It localises to the secreted. The enzyme catalyses (3R)-hydroxybutanoate dimer + H2O = 2 (R)-3-hydroxybutanoate + H(+). It participates in lipid metabolism; butanoate metabolism. In terms of biological role, participates in the degradation of poly-3-hydroxybutyrate (PHB). It works downstream of poly(3-hydroxybutyrate) depolymerase, hydrolyzing D(-)-3-hydroxybutyrate oligomers of various length (3HB-oligomers) into 3HB-monomers. In Paraburkholderia xenovorans (strain LB400), this protein is D-(-)-3-hydroxybutyrate oligomer hydrolase.